A 449-amino-acid polypeptide reads, in one-letter code: Glucose-6-phosphate isomerase (449 aa).

Glu290 (proton donor) is an active-site residue. Catalysis depends on residues His311 and Lys425.

It belongs to the GPI family.

The protein localises to the cytoplasm. The catalysed reaction is alpha-D-glucose 6-phosphate = beta-D-fructose 6-phosphate. The protein operates within carbohydrate biosynthesis; gluconeogenesis. It participates in carbohydrate degradation; glycolysis; D-glyceraldehyde 3-phosphate and glycerone phosphate from D-glucose: step 2/4. Functionally, catalyzes the reversible isomerization of glucose-6-phosphate to fructose-6-phosphate. The sequence is that of Glucose-6-phosphate isomerase from Clostridioides difficile (strain 630) (Peptoclostridium difficile).